The primary structure comprises 464 residues: Hydrogen cyanide synthase subunit HcnB (464 aa).

Heterotrimer of HcnA, HcnB and HcnC.

The protein localises to the cell membrane. The catalysed reaction is glycine + 2 A = hydrogen cyanide + 2 AH2 + CO2. Its activity is regulated as follows. Oxygen is necessary for cyanogenesis. Activated by succinate, glycine methyl ester, glucose and D,L-methionine in addition to glycine. Phenazine methosulfate, methylene blue, 2,6-dichlorophenolindophenol (DCIP) and ferricyanide can replace oxygen for the reaction. Inhibited by pyrrolnitrin and acriflavine at 1 mM concentration. Its function is as follows. A three-component membrane-bound flavoenzyme that catalyzes the formation of hydrogen cyanide, a secondary metabolite, by transfer of electrons to a cyanide-resistant branch of the aerobic respiratory chain. In Pseudomonas aeruginosa (strain ATCC 15692 / DSM 22644 / CIP 104116 / JCM 14847 / LMG 12228 / 1C / PRS 101 / PAO1), this protein is Hydrogen cyanide synthase subunit HcnB.